We begin with the raw amino-acid sequence, 1221 residues long: Probable serine/threonine-protein kinase DDB_G0286465 (1221 aa).

Disordered regions lie at residues 1–37 (MTLRLDTSLKRGASRNIPPIPTFSSVSNENLSSSPYT), 104–133 (FSPSTGRTKNNNNNNNNNINNNNYKKNDNQ), and 173–263 (ENNS…NNNE). Low complexity-rich tracts occupy residues 24-37 (SSVSNENLSSSPYT), 112-127 (KNNNNNNNNNINNNNY), 173-192 (ENNSQNNNNNKYQINNNMQK), and 204-263 (NNNN…NNNE). In terms of domain architecture, Protein kinase spans 186–627 (INNNMQKTGG…PYKLLDHPFF (442 aa)). Residue 192 to 200 (KTGGRNGSV) participates in ATP binding. Lysine 271 serves as a coordination point for ATP. Residues 324-344 (NVNNNNSNNNNNNSNNNITNS) show a composition bias toward low complexity. The tract at residues 324-346 (NVNNNNSNNNNNNSNNNITNSRY) is disordered. Catalysis depends on aspartate 448, which acts as the Proton acceptor. Composition is skewed to low complexity over residues 538-550 (SPSSSSTTSTSTS) and 559-584 (DSSSSASSSSSSSSSSSSSSSSSLPK). Disordered regions lie at residues 538-604 (SPSS…PEKR), 712-782 (PNLS…KEKL), 823-858 (KFEKKQRQIQDSEKVNKNEEENQTKDDADNISPPLP), 959-1008 (KENI…SYCN), and 1105-1152 (KKQE…QQEK). Residues 591 to 604 (RSKDNQSKLDPEKR) show a composition bias toward basic and acidic residues. The segment covering 725-738 (KKQLQQYQQQQKQQ) has biased composition (low complexity). Acidic residues predominate over residues 746 to 756 (DDEEEKEEEEK). 2 stretches are compositionally biased toward basic and acidic residues: residues 757–769 (EKEKEKEKEKEKE) and 823–850 (KFEKKQRQIQDSEKVNKNEEENQTKDDA). Residues 959-993 (KENIINFHNNNNNNNNNNNNNNNNNNNNNNNNNNN) are compositionally biased toward low complexity.

The protein belongs to the protein kinase superfamily. Ser/Thr protein kinase family.

It catalyses the reaction L-seryl-[protein] + ATP = O-phospho-L-seryl-[protein] + ADP + H(+). The enzyme catalyses L-threonyl-[protein] + ATP = O-phospho-L-threonyl-[protein] + ADP + H(+). The protein is Probable serine/threonine-protein kinase DDB_G0286465 of Dictyostelium discoideum (Social amoeba).